The sequence spans 302 residues: tRNA-cytidine(32) 2-sulfurtransferase (302 aa).

A PP-loop motif motif is present at residues 43 to 48 (SGGKDS). Positions 118, 121, and 209 each coordinate [4Fe-4S] cluster.

It belongs to the TtcA family. In terms of assembly, homodimer. Mg(2+) serves as cofactor. The cofactor is [4Fe-4S] cluster.

Its subcellular location is the cytoplasm. It catalyses the reaction cytidine(32) in tRNA + S-sulfanyl-L-cysteinyl-[cysteine desulfurase] + AH2 + ATP = 2-thiocytidine(32) in tRNA + L-cysteinyl-[cysteine desulfurase] + A + AMP + diphosphate + H(+). Its pathway is tRNA modification. Functionally, catalyzes the ATP-dependent 2-thiolation of cytidine in position 32 of tRNA, to form 2-thiocytidine (s(2)C32). The sulfur atoms are provided by the cysteine/cysteine desulfurase (IscS) system. In Polynucleobacter necessarius subsp. necessarius (strain STIR1), this protein is tRNA-cytidine(32) 2-sulfurtransferase.